A 265-amino-acid chain; its full sequence is Hydroxyethylthiazole kinase 1 (265 aa).

Residue methionine 39 coordinates substrate. ATP-binding residues include lysine 115 and threonine 168. Glycine 195 provides a ligand contact to substrate.

This sequence belongs to the Thz kinase family. Mg(2+) is required as a cofactor.

It carries out the reaction 5-(2-hydroxyethyl)-4-methylthiazole + ATP = 4-methyl-5-(2-phosphooxyethyl)-thiazole + ADP + H(+). The protein operates within cofactor biosynthesis; thiamine diphosphate biosynthesis; 4-methyl-5-(2-phosphoethyl)-thiazole from 5-(2-hydroxyethyl)-4-methylthiazole: step 1/1. Its function is as follows. Catalyzes the phosphorylation of the hydroxyl group of 4-methyl-5-beta-hydroxyethylthiazole (THZ). In Clostridium botulinum (strain Loch Maree / Type A3), this protein is Hydroxyethylthiazole kinase 1.